Reading from the N-terminus, the 337-residue chain is DNA replication regulator sld2 (337 aa).

Phosphothreonine; by cdc2 occurs at positions 60 and 74. Residues 71 to 97 (KFQTPTKQRAETEANESPKAPRNDYLQ) are disordered. A Phosphoserine; by cdc2 modification is found at serine 87. Threonine 99 and threonine 154 each carry phosphothreonine; by cdc2. Serine 183 is subject to Phosphoserine. Residues 258 to 302 (SMNLSKSHLEGLPEIDEDAENGIDDNEDTTASKDSSPFLDLQSER) form a disordered region. Over residues 270–285 (PEIDEDAENGIDDNED) the composition is skewed to acidic residues.

Belongs to the SLD2 family. As to quaternary structure, interacts with rad4. Post-translationally, phosphorylated by cdc2 at the onset of S-phase.

It is found in the cytoplasm. It localises to the nucleus. Its function is as follows. Has a role in the initiation of DNA replication. Required at S-phase checkpoint. In Schizosaccharomyces pombe (strain 972 / ATCC 24843) (Fission yeast), this protein is DNA replication regulator sld2 (drc1).